The primary structure comprises 459 residues: Phosphoglucosamine mutase (459 aa).

Catalysis depends on Ser102, which acts as the Phosphoserine intermediate. Mg(2+)-binding residues include Ser102, Asp243, Asp245, and Asp247. A Phosphoserine modification is found at Ser102.

It belongs to the phosphohexose mutase family. Mg(2+) is required as a cofactor. Post-translationally, activated by phosphorylation.

It carries out the reaction alpha-D-glucosamine 1-phosphate = D-glucosamine 6-phosphate. Catalyzes the conversion of glucosamine-6-phosphate to glucosamine-1-phosphate. The polypeptide is Phosphoglucosamine mutase (Bartonella henselae (strain ATCC 49882 / DSM 28221 / CCUG 30454 / Houston 1) (Rochalimaea henselae)).